The sequence spans 342 residues: tRNA dimethylallyltransferase (342 aa).

Glycine 39–threonine 46 serves as a coordination point for ATP. Threonine 41–threonine 46 contributes to the substrate binding site. Residues aspartate 64–glutamine 67 form an interaction with substrate tRNA region.

This sequence belongs to the IPP transferase family. As to quaternary structure, monomer. The cofactor is Mg(2+).

It catalyses the reaction adenosine(37) in tRNA + dimethylallyl diphosphate = N(6)-dimethylallyladenosine(37) in tRNA + diphosphate. Catalyzes the transfer of a dimethylallyl group onto the adenine at position 37 in tRNAs that read codons beginning with uridine, leading to the formation of N6-(dimethylallyl)adenosine (i(6)A). In Chlamydia abortus (strain DSM 27085 / S26/3) (Chlamydophila abortus), this protein is tRNA dimethylallyltransferase.